We begin with the raw amino-acid sequence, 109 residues long: Large ribosomal subunit protein P1 (109 aa).

Positions 71 to 109 are disordered; that stretch reads APAAASSAPAKKEEPKKEEPKKEEPKEEETDMDMGDLFG. Over residues 80–95 the composition is skewed to basic and acidic residues; it reads AKKEEPKKEEPKKEEP. Tandem repeats lie at residues 81–85, 86–90, and 91–95. The segment at 81-95 is 3 X 5 AA tandem repeats of K-K-E-E-P; it reads KKEEPKKEEPKKEEP. Acidic residues predominate over residues 96 to 109; that stretch reads KEEETDMDMGDLFG.

The protein belongs to the eukaryotic ribosomal protein P1/P2 family. In terms of processing, not phosphorylated.

This Tetrahymena thermophila protein is Large ribosomal subunit protein P1 (RPLP1).